Reading from the N-terminus, the 182-residue chain is CDP-diacylglycerol--glycerol-3-phosphate 3-phosphatidyltransferase (182 aa).

Over 1 to 12 the chain is Cytoplasmic; the sequence is MRLNIPTCLTLF. The helical transmembrane segment at 13–37 threads the bilayer; it reads RLIIVPFFIIVFYLPFSNASFYSAI. Over 38-60 the chain is Periplasmic; the sequence is IFILAALTDWFDGFLARKLNQTT. A helical transmembrane segment spans residues 61–81; sequence CFGAFLDPVADKIIVVIGLIL. Residues 82–86 are Cytoplasmic-facing; the sequence is IIEYF. The helical transmembrane segment at 87–107 threads the bilayer; that stretch reads HSFWITIPSLIMIIREIIISS. Residues 108 to 145 lie on the Periplasmic side of the membrane; that stretch reads LREWMAEIGKNNLLSVSLISKLKTSIQMLAIFSLLWKE. Residues 146-168 traverse the membrane as a helical segment; the sequence is TYIIIIIGILSLYVSSILAFLSM. Over 169–181 the chain is Cytoplasmic; that stretch reads LKYFYIAWRDLFR.

The protein belongs to the CDP-alcohol phosphatidyltransferase class-I family.

It is found in the cell inner membrane. The enzyme catalyses a CDP-1,2-diacyl-sn-glycerol + sn-glycerol 3-phosphate = a 1,2-diacyl-sn-glycero-3-phospho-(1'-sn-glycero-3'-phosphate) + CMP + H(+). The protein operates within phospholipid metabolism; phosphatidylglycerol biosynthesis; phosphatidylglycerol from CDP-diacylglycerol: step 1/2. Its function is as follows. Catalyzes the conversion of cytidine diphosphate diacylglycerol (CDP-DG) and glycerol 3-phosphate into phosphatidylglycerol. Essential for the synthesis of anionic phospholipids, thereby playing a role in balancing the ratio of zwitterionic and anionic phospholipids, which is thought to be important for normal membrane function. This is CDP-diacylglycerol--glycerol-3-phosphate 3-phosphatidyltransferase from Wigglesworthia glossinidia brevipalpis.